Reading from the N-terminus, the 167-residue chain is Large ribosomal subunit protein uL10 (167 aa).

This sequence belongs to the universal ribosomal protein uL10 family. As to quaternary structure, part of the ribosomal stalk of the 50S ribosomal subunit. The N-terminus interacts with L11 and the large rRNA to form the base of the stalk. The C-terminus forms an elongated spine to which L12 dimers bind in a sequential fashion forming a multimeric L10(L12)X complex.

Functionally, forms part of the ribosomal stalk, playing a central role in the interaction of the ribosome with GTP-bound translation factors. This Streptococcus mutans serotype c (strain ATCC 700610 / UA159) protein is Large ribosomal subunit protein uL10.